Consider the following 127-residue polypeptide: Ribosome-binding factor A (127 aa).

It belongs to the RbfA family. As to quaternary structure, monomer. Binds 30S ribosomal subunits, but not 50S ribosomal subunits or 70S ribosomes.

It is found in the cytoplasm. Functionally, one of several proteins that assist in the late maturation steps of the functional core of the 30S ribosomal subunit. Associates with free 30S ribosomal subunits (but not with 30S subunits that are part of 70S ribosomes or polysomes). Required for efficient processing of 16S rRNA. May interact with the 5'-terminal helix region of 16S rRNA. The polypeptide is Ribosome-binding factor A (Nitrosococcus oceani (strain ATCC 19707 / BCRC 17464 / JCM 30415 / NCIMB 11848 / C-107)).